The following is a 332-amino-acid chain: Phenylalanine--tRNA ligase alpha subunit (332 aa).

Glu-252 lines the Mg(2+) pocket.

Belongs to the class-II aminoacyl-tRNA synthetase family. Phe-tRNA synthetase alpha subunit type 1 subfamily. Tetramer of two alpha and two beta subunits. Mg(2+) is required as a cofactor.

The protein resides in the cytoplasm. It catalyses the reaction tRNA(Phe) + L-phenylalanine + ATP = L-phenylalanyl-tRNA(Phe) + AMP + diphosphate + H(+). This chain is Phenylalanine--tRNA ligase alpha subunit, found in Marinobacter nauticus (strain ATCC 700491 / DSM 11845 / VT8) (Marinobacter aquaeolei).